Here is a 496-residue protein sequence, read N- to C-terminus: NADH-quinone oxidoreductase subunit N (496 aa).

A run of 13 helical transmembrane segments spans residues 16–36 (SLSP…VGAI), 46–66 (CVFC…FNGL), 79–99 (ISII…PLAL), 116–136 (FLFM…LIIF), 166–186 (FAMG…FYLA), 208–228 (LIIL…LSLI), 245–267 (LAGY…IFAM), 278–298 (DMLY…ALVQ), 304–324 (MLAF…VANS), 331–351 (LFFY…MLWV), 382–402 (AVIM…SVFW), 422–442 (IIMI…VFMF), and 464–484 (VIVG…GAIL).

This sequence belongs to the complex I subunit 2 family. In terms of assembly, NDH-1 is composed of 14 different subunits. Subunits NuoA, H, J, K, L, M, N constitute the membrane sector of the complex.

The protein resides in the cell inner membrane. It carries out the reaction a quinone + NADH + 5 H(+)(in) = a quinol + NAD(+) + 4 H(+)(out). NDH-1 shuttles electrons from NADH, via FMN and iron-sulfur (Fe-S) centers, to quinones in the respiratory chain. The immediate electron acceptor for the enzyme in this species is believed to be ubiquinone. Couples the redox reaction to proton translocation (for every two electrons transferred, four hydrogen ions are translocated across the cytoplasmic membrane), and thus conserves the redox energy in a proton gradient. This chain is NADH-quinone oxidoreductase subunit N, found in Campylobacter concisus (strain 13826).